We begin with the raw amino-acid sequence, 51 residues long: MRDKIKLVSTAGTGYFYTTTKNKRTMPGKMEIKKFDPKVRQHVIFKEAKIK.

This sequence belongs to the bacterial ribosomal protein bL33 family.

In Psychrobacter sp. (strain PRwf-1), this protein is Large ribosomal subunit protein bL33.